The sequence spans 270 residues: Glutamate racemase (270 aa).

Residues D14–S15 and Y46–G47 each bind substrate. C77 (proton donor/acceptor) is an active-site residue. Residue N78–T79 participates in substrate binding. Catalysis depends on C189, which acts as the Proton donor/acceptor. A substrate-binding site is contributed by T190–H191.

It belongs to the aspartate/glutamate racemases family.

The enzyme catalyses L-glutamate = D-glutamate. The protein operates within cell wall biogenesis; peptidoglycan biosynthesis. In terms of biological role, provides the (R)-glutamate required for cell wall biosynthesis. The protein is Glutamate racemase of Neisseria meningitidis serogroup C.